Consider the following 748-residue polypeptide: Ribonucleoprotein PTB-binding 1 (748 aa).

Residues 1 to 42 (MAADVSVTHRPPLSPEAEAEAETPETVDRRTPEQELPPLDPE) form a disordered region. Ala-2 bears the N-acetylalanine mark. Phosphoserine is present on residues Ser-6 and Ser-14. Thr-31 carries the phosphothreonine modification. The short motif at 45-60 (RKRLEHTERQFRNRRK) is the Nuclear localization signal element. RRM domains are found at residues 59 to 130 (RKIL…LQPT), 132 to 210 (ALLC…WTDA), and 221 to 299 (RCLC…FCAP). The segment at 307 to 401 (LAALIAAQAT…QSQSQKKPGI (95 aa)) is interaction with PTBP1. Disordered stretches follow at residues 390 to 505 (QSQS…GEPP), 525 to 647 (SNLA…PLSH), and 672 to 731 (KAVG…QHSQ). Thr-469 is modified (phosphothreonine). Phosphoserine is present on residues Ser-480, Ser-576, Ser-626, and Ser-630. Over residues 675 to 685 (GSSPMGSSEGL) the composition is skewed to low complexity. Phosphoserine occurs at positions 716 and 720. Residues 743–746 (KRKR) carry the Nuclear localization signal motif.

As to quaternary structure, interacts with PTBP1, RAVER2, VCL and ACTN1. Part of a complex containing RAVER1, VCL and ACTN1. As to expression, ubiquitous. Detected in aorta, brain, gut, heart, kidney, liver, spleen, uterus and skeletal muscle.

The protein resides in the nucleus. Its subcellular location is the cytoplasm. In terms of biological role, cooperates with PTBP1 to modulate regulated alternative splicing events. Promotes exon skipping. Cooperates with PTBP1 to modulate switching between mutually exclusive exons during maturation of the TPM1 pre-mRNA. This chain is Ribonucleoprotein PTB-binding 1 (Raver1), found in Rattus norvegicus (Rat).